A 90-amino-acid chain; its full sequence is Small ribosomal subunit protein uS17 (90 aa).

The protein belongs to the universal ribosomal protein uS17 family. Part of the 30S ribosomal subunit.

One of the primary rRNA binding proteins, it binds specifically to the 5'-end of 16S ribosomal RNA. This chain is Small ribosomal subunit protein uS17, found in Acidiphilium cryptum (strain JF-5).